A 134-amino-acid polypeptide reads, in one-letter code: Cytochrome b (134 aa).

A run of 3 helical transmembrane segments spans residues 33-53 (FGSL…FLAI), 77-98 (WLLR…YLHV), and 113-133 (WNIG…GYVL). Positions 83 and 97 each coordinate heme b.

This sequence belongs to the cytochrome b family. In terms of assembly, the cytochrome bc1 complex contains 11 subunits: 3 respiratory subunits (MT-CYB, CYC1 and UQCRFS1), 2 core proteins (UQCRC1 and UQCRC2) and 6 low-molecular weight proteins (UQCRH/QCR6, UQCRB/QCR7, UQCRQ/QCR8, UQCR10/QCR9, UQCR11/QCR10 and a cleavage product of UQCRFS1). This cytochrome bc1 complex then forms a dimer. Heme b serves as cofactor.

It localises to the mitochondrion inner membrane. Its function is as follows. Component of the ubiquinol-cytochrome c reductase complex (complex III or cytochrome b-c1 complex) that is part of the mitochondrial respiratory chain. The b-c1 complex mediates electron transfer from ubiquinol to cytochrome c. Contributes to the generation of a proton gradient across the mitochondrial membrane that is then used for ATP synthesis. The polypeptide is Cytochrome b (MT-CYB) (Platyrrhinus helleri (Heller's broad-nosed bat)).